We begin with the raw amino-acid sequence, 198 residues long: Probable GTP-binding protein EngB (198 aa).

The 163-residue stretch at 36 to 198 (SEPQFAFIGR…NLSKLQELLE (163 aa)) folds into the EngB-type G domain. GTP-binding positions include 44–51 (GRSNVGKS), 70–74 (GRTQL), 88–91 (DLPG), 155–158 (NKID), and 182–184 (ISA). Mg(2+)-binding residues include S51 and T72.

This sequence belongs to the TRAFAC class TrmE-Era-EngA-EngB-Septin-like GTPase superfamily. EngB GTPase family. It depends on Mg(2+) as a cofactor.

Its function is as follows. Necessary for normal cell division and for the maintenance of normal septation. In Mesomycoplasma hyopneumoniae (strain 232) (Mycoplasma hyopneumoniae), this protein is Probable GTP-binding protein EngB.